The following is a 432-amino-acid chain: Enolase (432 aa).

Residue Gln167 participates in (2R)-2-phosphoglycerate binding. The active-site Proton donor is the Glu209. Positions 246, 290, and 317 each coordinate Mg(2+). (2R)-2-phosphoglycerate-binding residues include Lys342, Arg371, Ser372, and Lys393. Catalysis depends on Lys342, which acts as the Proton acceptor.

The protein belongs to the enolase family. Component of the RNA degradosome, a multiprotein complex involved in RNA processing and mRNA degradation. Mg(2+) serves as cofactor.

Its subcellular location is the cytoplasm. It is found in the secreted. The protein localises to the cell surface. The enzyme catalyses (2R)-2-phosphoglycerate = phosphoenolpyruvate + H2O. Its pathway is carbohydrate degradation; glycolysis; pyruvate from D-glyceraldehyde 3-phosphate: step 4/5. Catalyzes the reversible conversion of 2-phosphoglycerate (2-PG) into phosphoenolpyruvate (PEP). It is essential for the degradation of carbohydrates via glycolysis. This Klebsiella pneumoniae (strain 342) protein is Enolase.